A 174-amino-acid chain; its full sequence is Probable inosine/xanthosine triphosphatase (174 aa).

D63 contacts Mg(2+).

Belongs to the YjjX NTPase family. In terms of assembly, homodimer. Mg(2+) serves as cofactor. Mn(2+) is required as a cofactor.

It carries out the reaction XTP + H2O = XDP + phosphate + H(+). The enzyme catalyses ITP + H2O = IDP + phosphate + H(+). Its function is as follows. Phosphatase that hydrolyzes non-canonical purine nucleotides such as XTP and ITP to their respective diphosphate derivatives. Probably excludes non-canonical purines from DNA/RNA precursor pool, thus preventing their incorporation into DNA/RNA and avoiding chromosomal lesions. In Methanocella arvoryzae (strain DSM 22066 / NBRC 105507 / MRE50), this protein is Probable inosine/xanthosine triphosphatase.